We begin with the raw amino-acid sequence, 108 residues long: Anti-sigma-B factor antagonist (108 aa).

In terms of domain architecture, STAS spans 3–108; that stretch reads LNIETITHDD…MHVNEGTEVE (106 aa). Phosphoserine is present on S57.

The protein belongs to the anti-sigma-factor antagonist family. Phosphorylated by RsbW on a serine residue.

Functionally, positive regulator of sigma-B activity. Non-phosphorylated RsbV binds to RsbW, preventing its association with sigma-B. When phosphorylated, releases RsbW, which is then free to complex with and inactivate sigma-B. The sequence is that of Anti-sigma-B factor antagonist (rsbV) from Staphylococcus epidermidis.